The sequence spans 339 residues: uncharacterized protein (339 aa).

NADP(+) is bound by residues Ile54, Lys78, Asp101, Asn128, Tyr213, and Lys217. Tyr213 functions as the Proton donor in the catalytic mechanism. Lys217 functions as the Lowers pKa of active site Tyr in the catalytic mechanism.

The protein belongs to the short-chain dehydrogenases/reductases (SDR) family.

This is an uncharacterized protein from Schizosaccharomyces pombe (strain 972 / ATCC 24843) (Fission yeast).